The primary structure comprises 65 residues: MSKSKGARIVITLECCCRNLNNITKKKSGIFRYTSTKNRKNTPNRIELMKFCPYCNKHQKFREIK.

It belongs to the bacterial ribosomal protein bL33 family.

It is found in the plastid. Its subcellular location is the chloroplast. The sequence is that of Large ribosomal subunit protein bL33c from Gracilaria tenuistipitata var. liui (Red alga).